Consider the following 362-residue polypeptide: Protein ABHD12B (362 aa).

Belongs to the serine esterase family.

This is Protein ABHD12B from Homo sapiens (Human).